A 563-amino-acid chain; its full sequence is DEAD-box ATP-dependent RNA helicase 25 (563 aa).

The disordered stretch occupies residues 21–57; the sequence is KKLTSDEDGSGKLVKDNNKSLKRGREGKSDVDEPLIK. Residues 23–56 show a composition bias toward basic and acidic residues; it reads LTSDEDGSGKLVKDNNKSLKRGREGKSDVDEPLI. A Phosphoserine modification is found at Ser25. Positions 80–108 match the Q motif motif; that stretch reads TRFDQFPLSPLTLKGIEDAGFKTMTVVQE. A Helicase ATP-binding domain is found at 111-294; the sequence is LPLILQGKDI…HVALKRDHEF (184 aa). ATP is bound at residue 124–131; it reads AKTGTGKT. The DEAD box signature appears at 242–245; that stretch reads DEAD. A Helicase C-terminal domain is found at 328-479; the sequence is LLKKHITDNV…AVKKVQKGLI (152 aa).

This sequence belongs to the DEAD box helicase family.

The catalysed reaction is ATP + H2O = ADP + phosphate + H(+). This Arabidopsis thaliana (Mouse-ear cress) protein is DEAD-box ATP-dependent RNA helicase 25 (RH25).